We begin with the raw amino-acid sequence, 213 residues long: EEF1A lysine methyltransferase 1 (213 aa).

It belongs to the class I-like SAM-binding methyltransferase superfamily. EFM5 family.

The protein resides in the cytoplasm. The enzyme catalyses L-lysyl-[protein] + 3 S-adenosyl-L-methionine = N(6),N(6),N(6)-trimethyl-L-lysyl-[protein] + 3 S-adenosyl-L-homocysteine + 3 H(+). Protein-lysine methyltransferase that selectively catalyzes the trimethylation of EEF1A at 'Lys-79'. This chain is EEF1A lysine methyltransferase 1, found in Gallus gallus (Chicken).